The following is a 243-amino-acid chain: uncharacterized protein (243 aa).

The N-terminal stretch at 1–19 (MDELALSFSLTCLLPENRA) is a signal peptide. Residue Asn-136 is glycosylated (N-linked (GlcNAc...) asparagine).

Its subcellular location is the secreted. This is an uncharacterized protein from Homo sapiens (Human).